We begin with the raw amino-acid sequence, 122 residues long: Serum amyloid A-2 protein (122 aa).

The signal sequence occupies residues 1–18; the sequence is MKPFLSIIFCFLVLGVDS. Position 19 is a pyrrolidone carboxylic acid (Q19). The tract at residues 100-122 is disordered; sequence ANEWGRSGKDPNFFRPPGLPSKY.

This sequence belongs to the SAA family. Apolipoprotein of the HDL complex. As to expression, expressed by the liver; secreted in plasma.

It is found in the secreted. Major acute phase reactant. This chain is Serum amyloid A-2 protein (SAA2), found in Mesocricetus auratus (Golden hamster).